We begin with the raw amino-acid sequence, 132 residues long: Small ribosomal subunit protein uS8 (132 aa).

The protein belongs to the universal ribosomal protein uS8 family. Part of the 30S ribosomal subunit. Contacts proteins S5 and S12.

Functionally, one of the primary rRNA binding proteins, it binds directly to 16S rRNA central domain where it helps coordinate assembly of the platform of the 30S subunit. This is Small ribosomal subunit protein uS8 from Clostridium botulinum (strain ATCC 19397 / Type A).